Consider the following 82-residue polypeptide: Immediate early response 3-interacting protein 1 (82 aa).

A run of 2 helical transmembrane segments spans residues 2–22 (AFTL…VAVL) and 62–82 (VMRV…LLFG).

This sequence belongs to the YOS1 family.

Its subcellular location is the endoplasmic reticulum membrane. Functionally, regulator of endoplasmic reticulum secretion that acts as a key determinant of brain size. Required for secretion of extracellular matrix proteins. Required for correct brain development by depositing sufficient extracellular matrix proteins for tissue integrity and the proliferation of neural progenitors. Acts as a regulator of the unfolded protein response (UPR). The protein is Immediate early response 3-interacting protein 1 of Xenopus laevis (African clawed frog).